The chain runs to 331 residues: Ketol-acid reductoisomerase (NADP(+)) (331 aa).

The 181-residue stretch at 1-181 (MKVYYEKDAN…GGSRSGVIET (181 aa)) folds into the KARI N-terminal Rossmann domain. NADP(+)-binding positions include 24-27 (YGSQ), Arg-47, and 82-85 (DQVQ). His-107 is a catalytic residue. Position 133 (Gly-133) interacts with NADP(+). The KARI C-terminal knotted domain occupies 182–327 (TFREETETDL…GELRGMMPWL (146 aa)). Residues Asp-190, Glu-194, Glu-226, and Glu-230 each coordinate Mg(2+). Position 251 (Ser-251) interacts with substrate.

The protein belongs to the ketol-acid reductoisomerase family. It depends on Mg(2+) as a cofactor.

It carries out the reaction (2R)-2,3-dihydroxy-3-methylbutanoate + NADP(+) = (2S)-2-acetolactate + NADPH + H(+). It catalyses the reaction (2R,3R)-2,3-dihydroxy-3-methylpentanoate + NADP(+) = (S)-2-ethyl-2-hydroxy-3-oxobutanoate + NADPH + H(+). The protein operates within amino-acid biosynthesis; L-isoleucine biosynthesis; L-isoleucine from 2-oxobutanoate: step 2/4. Its pathway is amino-acid biosynthesis; L-valine biosynthesis; L-valine from pyruvate: step 2/4. Its function is as follows. Involved in the biosynthesis of branched-chain amino acids (BCAA). Catalyzes an alkyl-migration followed by a ketol-acid reduction of (S)-2-acetolactate (S2AL) to yield (R)-2,3-dihydroxy-isovalerate. In the isomerase reaction, S2AL is rearranged via a Mg-dependent methyl migration to produce 3-hydroxy-3-methyl-2-ketobutyrate (HMKB). In the reductase reaction, this 2-ketoacid undergoes a metal-dependent reduction by NADPH to yield (R)-2,3-dihydroxy-isovalerate. The sequence is that of Ketol-acid reductoisomerase (NADP(+)) from Nitratidesulfovibrio vulgaris (strain ATCC 29579 / DSM 644 / CCUG 34227 / NCIMB 8303 / VKM B-1760 / Hildenborough) (Desulfovibrio vulgaris).